A 90-amino-acid chain; its full sequence is Phosphocarrier protein NPr (90 aa).

The 89-residue stretch at 2 to 90 folds into the HPr domain; that stretch reads TQYRRVAIKN…ALFESGFDED (89 aa). The active-site Pros-phosphohistidine intermediate is histidine 16.

This sequence belongs to the HPr family.

Its subcellular location is the cytoplasm. Component of the phosphoenolpyruvate-dependent nitrogen-metabolic phosphotransferase system (nitrogen-metabolic PTS), that seems to be involved in regulating nitrogen metabolism. The phosphoryl group from phosphoenolpyruvate (PEP) is transferred to the phosphoryl carrier protein NPr by enzyme I-Ntr. Phospho-NPr then transfers it to EIIA-Ntr. Could function in the transcriptional regulation of sigma-54 dependent operons in conjunction with the NPr (PtsO) and EIIA-Ntr (PtsN) proteins. In Proteus mirabilis (strain HI4320), this protein is Phosphocarrier protein NPr (ptsO).